A 560-amino-acid chain; its full sequence is MGQPAPYAEGPIQGGDAGELCKCDFLVSISIPQTRSDIPAGARRSSMGPRSLDTCWGRGPERHVHRLECNGVIFTHRNLCLPGGKTKTENEEKTAQLNISKESESHRLIVEGLLMDVPQHPDFKDRLEKSQLHDTGNKTKIGDCTDLTVQDHESSTTEREEIARKLEESSVSTHLITKQGFAKEQVFYKCGECGSYYNPHSDFHLHQRVHTNEKPYTCKECGKTFRYNSKLSRHQKIHTGEKPYSCEECGQAFSQNSHLLQHQKLHGGQRPYECTDCGKTFSYNSKLIRHQRIHTGEKPFKCKECGKAFSCSYDCIIHERIHNGEKPYECKECGKSLSSNSVLIQHQRIHTGEKPYECKECGKAFHRSSVFLQHQRFHTGEQLYKCNECWKTFSCSSRFIVHQRIHNGEKPYECQECGKTFSQKITLVQHQRVHTGEKPYECKECGKAFRWNASFIQHQKWHTRKKLINGTGLSAVKPYCPCAILSPLPPQHTCSALAPPGPPLSSSHAVVLPPSVPFFLLLPSSEKANPSPVQIAHFFQDLAFPGKSSLQSPNPLSHSL.

10 consecutive C2H2-type zinc fingers follow at residues 188-210 (YKCG…QRVH), 216-238 (YTCK…QKIH), 244-266 (YSCE…QKLH), 272-294 (YECT…QRIH), 300-322 (FKCK…ERIH), 328-350 (YECK…QRIH), 356-378 (YECK…QRFH), 384-406 (YKCN…QRIH), 412-434 (YECQ…QRVH), and 440-462 (YECK…QKWH).

This sequence belongs to the krueppel C2H2-type zinc-finger protein family.

It is found in the nucleus. In terms of biological role, may be involved in transcriptional regulation. This is Zinc finger protein 619 (ZNF619) from Homo sapiens (Human).